Reading from the N-terminus, the 167-residue chain is Telethonin (167 aa).

A Phosphoserine modification is found at serine 39. The segment at 144–167 is disordered; it reads VPVSKPGALRRSLSRSMSQEAQRG. Polar residues predominate over residues 157-167; that stretch reads SRSMSQEAQRG.

As to quaternary structure, interacts with MYOZ1, MYOZ2 and MYOZ3. Interacts with CSRP3. Interacts directly with the N-terminal Ig-like domains of 2 titin (TTN) molecules. Interacts with ANKRD2; the interaction is direct. Heart and skeletal muscle.

It is found in the cytoplasm. The protein localises to the myofibril. The protein resides in the sarcomere. Functionally, muscle assembly regulating factor. Mediates the antiparallel assembly of titin (TTN) molecules at the sarcomeric Z-disk. This is Telethonin (TCAP) from Homo sapiens (Human).